Reading from the N-terminus, the 504-residue chain is Maturase K (504 aa).

This sequence belongs to the intron maturase 2 family. MatK subfamily.

The protein resides in the plastid. It is found in the chloroplast. In terms of biological role, usually encoded in the trnK tRNA gene intron. Probably assists in splicing its own and other chloroplast group II introns. This chain is Maturase K, found in Draba nemorosa (Woodland whitlowgrass).